Here is a 490-residue protein sequence, read N- to C-terminus: Bifunctional protein GlmU (490 aa).

Residues 1 to 241 are pyrophosphorylase; it reads MSSPGDTAVL…SALVAGVNNR (241 aa). UDP-N-acetyl-alpha-D-glucosamine is bound by residues 12 to 15, Lys26, Gln83, 88 to 89, 112 to 114, Gly151, Glu166, Asn181, and Asn239; these read LAAG, GT, and SGD. Asp114 contributes to the Mg(2+) binding site. Asn239 contacts Mg(2+). The tract at residues 242-262 is linker; sequence VQLAQLGAELNRRIVAAHQLA. An N-acetyltransferase region spans residues 263 to 490; that stretch reads GVTVVDPATT…AGGRPAGEAE (228 aa). Arg344 and Lys362 together coordinate UDP-N-acetyl-alpha-D-glucosamine. Residue His374 is the Proton acceptor of the active site. The UDP-N-acetyl-alpha-D-glucosamine site is built by Tyr377 and Asn388. Acetyl-CoA is bound by residues Ala391, 397–398, Ser416, and Ala434; that span reads NY. The segment at 462–490 is disordered; the sequence is RRKRPGSAAARAAEAAEKAAGGRPAGEAE. Positions 467–490 are enriched in low complexity; that stretch reads GSAAARAAEAAEKAAGGRPAGEAE.

This sequence in the N-terminal section; belongs to the N-acetylglucosamine-1-phosphate uridyltransferase family. In the C-terminal section; belongs to the transferase hexapeptide repeat family. Homotrimer. The cofactor is Mg(2+).

The protein localises to the cytoplasm. The enzyme catalyses alpha-D-glucosamine 1-phosphate + acetyl-CoA = N-acetyl-alpha-D-glucosamine 1-phosphate + CoA + H(+). The catalysed reaction is N-acetyl-alpha-D-glucosamine 1-phosphate + UTP + H(+) = UDP-N-acetyl-alpha-D-glucosamine + diphosphate. It participates in nucleotide-sugar biosynthesis; UDP-N-acetyl-alpha-D-glucosamine biosynthesis; N-acetyl-alpha-D-glucosamine 1-phosphate from alpha-D-glucosamine 6-phosphate (route II): step 2/2. The protein operates within nucleotide-sugar biosynthesis; UDP-N-acetyl-alpha-D-glucosamine biosynthesis; UDP-N-acetyl-alpha-D-glucosamine from N-acetyl-alpha-D-glucosamine 1-phosphate: step 1/1. It functions in the pathway bacterial outer membrane biogenesis; LPS lipid A biosynthesis. Its function is as follows. Catalyzes the last two sequential reactions in the de novo biosynthetic pathway for UDP-N-acetylglucosamine (UDP-GlcNAc). The C-terminal domain catalyzes the transfer of acetyl group from acetyl coenzyme A to glucosamine-1-phosphate (GlcN-1-P) to produce N-acetylglucosamine-1-phosphate (GlcNAc-1-P), which is converted into UDP-GlcNAc by the transfer of uridine 5-monophosphate (from uridine 5-triphosphate), a reaction catalyzed by the N-terminal domain. The protein is Bifunctional protein GlmU of Mycobacterium avium (strain 104).